A 211-amino-acid polypeptide reads, in one-letter code: Probable calcium-binding protein CML11 (211 aa).

Disordered regions lie at residues 1–22 and 40–60; these read MSEPATTTPTPTPAGDHDAAAT and SCSAQQQQQQQQQQEEPLGDD. The segment covering 44–53 has biased composition (low complexity); that stretch reads QQQQQQQQQQ. 4 consecutive EF-hand domains span residues 60–95, 96–131, 136–171, and 172–207; these read DQLGELREIFRSFDRNGDGSLTQLELGSLLRSLGLK, PSTDELDSLIQRADTNSNGLIEFSEFVALVAPELLY, YSEDQIRRLFNIFDRDGNGFITAAELAHSMAKLGHA, and LTVKELTGMIKEADTDGDGRISFQEFSRAITAAAFD. Ca(2+) is bound by residues aspartate 73, asparagine 75, aspartate 77, serine 79, glutamate 84, aspartate 109, asparagine 111, asparagine 113, glutamate 120, aspartate 149, aspartate 151, asparagine 153, glutamate 160, aspartate 185, aspartate 187, aspartate 189, arginine 191, and glutamate 196.

Potential calcium sensor. This is Probable calcium-binding protein CML11 (CML11) from Oryza sativa subsp. japonica (Rice).